We begin with the raw amino-acid sequence, 337 residues long: Glyceraldehyde-3-phosphate dehydrogenase (337 aa).

NAD(+)-binding positions include 12-13 (RI), Asp34, and Lys79. D-glyceraldehyde 3-phosphate contacts are provided by residues 150-152 (SCT), Thr181, 210-211 (TG), and Arg233. Cys151 (nucleophile) is an active-site residue. Asn315 is an NAD(+) binding site.

This sequence belongs to the glyceraldehyde-3-phosphate dehydrogenase family. Homotetramer.

The protein resides in the cytoplasm. It catalyses the reaction D-glyceraldehyde 3-phosphate + phosphate + NAD(+) = (2R)-3-phospho-glyceroyl phosphate + NADH + H(+). The protein operates within carbohydrate degradation; glycolysis; pyruvate from D-glyceraldehyde 3-phosphate: step 1/5. The protein is Glyceraldehyde-3-phosphate dehydrogenase (GPD) of Cochliobolus lunatus (Filamentous fungus).